Here is a 141-residue protein sequence, read N- to C-terminus: Hemoglobin subunit alpha (141 aa).

One can recognise a Globin domain in the interval 1-141; it reads VLSPEDKNHV…VSTVLTSKYR (141 aa). Serine 3 is subject to Phosphoserine. Lysine 7 carries the post-translational modification N6-succinyllysine. An N6-acetyllysine; alternate modification is found at lysine 16. Lysine 16 is modified (N6-succinyllysine; alternate). The residue at position 24 (tyrosine 24) is a Phosphotyrosine. Serine 35 is subject to Phosphoserine. Position 40 is an N6-succinyllysine (lysine 40). Phosphoserine is present on serine 49. Residue histidine 58 coordinates O2. Histidine 87 contributes to the heme b binding site. Residue serine 102 is modified to Phosphoserine. Position 108 is a phosphothreonine (threonine 108). Serine 124 and serine 131 each carry phosphoserine. A phosphothreonine mark is found at threonine 134 and threonine 137. Position 138 is a phosphoserine (serine 138).

This sequence belongs to the globin family. As to quaternary structure, heterotetramer of two alpha chains and two beta chains. Red blood cells.

In terms of biological role, involved in oxygen transport from the lung to the various peripheral tissues. Its function is as follows. Hemopressin acts as an antagonist peptide of the cannabinoid receptor CNR1. Hemopressin-binding efficiently blocks cannabinoid receptor CNR1 and subsequent signaling. This Spalax ehrenbergi (Middle East blind mole rat) protein is Hemoglobin subunit alpha (HBA).